A 275-amino-acid chain; its full sequence is Epidermal growth factor-like protein 7 (275 aa).

The first 21 residues, 1-21 (MWGSGELLVAWFLVLAADGTT), serve as a signal peptide directing secretion. The EMI domain maps to 28 to 105 (SRRVCTVGIS…TSGLPGACGA (78 aa)). Intrachain disulfides connect C32–C90, C57–C63, C89–C103, C108–C118, C112–C124, C126–C135, C142–C153, and C149–C162. The 33-residue stretch at 104–136 (GAAICQPPCGNGGSCIRPGHCRCPVGWQGDTCQ) folds into the EGF-like 1 domain. The Cell attachment site signature appears at 131–133 (QGD). Positions 138 to 178 (DVDECSTGEASCPQRCVNTVGSYWCQGWEGQSPSADGTRCL) constitute an EGF-like 2; calcium-binding domain. Residues 173-193 (DGTRCLSKEGPSPVAPNPTAG) are disordered. Positions 196–220 (SMAREEVYRLQARVDVLEQKLQLVL) form a coiled coil.

Interacts with ITGAV/ITGB3 in an RGD-dependent manner, increasing endothelial cell's motility. Expressed specifically by endothelial cells of the highly vascularized organs heart, lung and kidney.

Its subcellular location is the secreted. The protein localises to the extracellular space. Functionally, regulates vascular tubulogenesis in vivo. Inhibits platelet-derived growth factor (PDGF)-BB-induced smooth muscle cell migration and promotes endothelial cell adhesion to the extracellular matrix and angiogenesis. In Mus musculus (Mouse), this protein is Epidermal growth factor-like protein 7 (Egfl7).